We begin with the raw amino-acid sequence, 449 residues long: Exodeoxyribonuclease 7 large subunit (449 aa).

The protein belongs to the XseA family. Heterooligomer composed of large and small subunits.

The protein localises to the cytoplasm. The catalysed reaction is Exonucleolytic cleavage in either 5'- to 3'- or 3'- to 5'-direction to yield nucleoside 5'-phosphates.. Functionally, bidirectionally degrades single-stranded DNA into large acid-insoluble oligonucleotides, which are then degraded further into small acid-soluble oligonucleotides. This Latilactobacillus sakei subsp. sakei (strain 23K) (Lactobacillus sakei subsp. sakei) protein is Exodeoxyribonuclease 7 large subunit.